The primary structure comprises 243 residues: Protein-L-isoaspartate O-methyltransferase 2 (243 aa).

The interval 21 to 42 is disordered; sequence DACADRGHPSAERSTPETERRR. Residues 23–42 show a composition bias toward basic and acidic residues; sequence CADRGHPSAERSTPETERRR. Residue serine 94 is part of the active site.

Belongs to the methyltransferase superfamily. L-isoaspartyl/D-aspartyl protein methyltransferase family.

Its subcellular location is the cytoplasm. The enzyme catalyses [protein]-L-isoaspartate + S-adenosyl-L-methionine = [protein]-L-isoaspartate alpha-methyl ester + S-adenosyl-L-homocysteine. Functionally, catalyzes the methyl esterification of L-isoaspartyl residues in peptides and proteins that result from spontaneous decomposition of normal L-aspartyl and L-asparaginyl residues. It plays a role in the repair and/or degradation of damaged proteins. This chain is Protein-L-isoaspartate O-methyltransferase 2, found in Anaeromyxobacter sp. (strain Fw109-5).